A 671-amino-acid polypeptide reads, in one-letter code: DNA ligase (671 aa).

Residues 32 to 36 (DAEYD), 81 to 82 (SL), and E113 contribute to the NAD(+) site. The N6-AMP-lysine intermediate role is filled by K115. R136, E173, K290, and K314 together coordinate NAD(+). Zn(2+) contacts are provided by C408, C411, C426, and C432. The BRCT domain occupies 593 to 671 (EIDSPFAGKT…EAEMIRLLGA (79 aa)).

It belongs to the NAD-dependent DNA ligase family. LigA subfamily. Requires Mg(2+) as cofactor. It depends on Mn(2+) as a cofactor.

The catalysed reaction is NAD(+) + (deoxyribonucleotide)n-3'-hydroxyl + 5'-phospho-(deoxyribonucleotide)m = (deoxyribonucleotide)n+m + AMP + beta-nicotinamide D-nucleotide.. In terms of biological role, DNA ligase that catalyzes the formation of phosphodiester linkages between 5'-phosphoryl and 3'-hydroxyl groups in double-stranded DNA using NAD as a coenzyme and as the energy source for the reaction. It is essential for DNA replication and repair of damaged DNA. The sequence is that of DNA ligase from Salmonella newport (strain SL254).